The sequence spans 347 residues: Protein RecA (347 aa).

68–75 (GPESSGKT) lines the ATP pocket.

This sequence belongs to the RecA family.

It localises to the cytoplasm. Its function is as follows. Can catalyze the hydrolysis of ATP in the presence of single-stranded DNA, the ATP-dependent uptake of single-stranded DNA by duplex DNA, and the ATP-dependent hybridization of homologous single-stranded DNAs. It interacts with LexA causing its activation and leading to its autocatalytic cleavage. This Rhodococcus jostii (strain RHA1) protein is Protein RecA.